A 185-amino-acid polypeptide reads, in one-letter code: Ribosome-recycling factor (185 aa).

The protein belongs to the RRF family.

It localises to the cytoplasm. Responsible for the release of ribosomes from messenger RNA at the termination of protein biosynthesis. May increase the efficiency of translation by recycling ribosomes from one round of translation to another. This Wigglesworthia glossinidia brevipalpis protein is Ribosome-recycling factor.